The following is a 224-amino-acid chain: ATP-dependent dethiobiotin synthetase BioD (224 aa).

Position 12-17 (12-17) interacts with ATP; the sequence is EVGKTV. Mg(2+) is bound at residue T16. K34 is a catalytic residue. T38 is a substrate binding site. Residues D47, 106–109, 166–167, and 196–198 each bind ATP; these read EGAG, GS, and PEG. Mg(2+) is bound by residues D47 and E106.

It belongs to the dethiobiotin synthetase family. In terms of assembly, homodimer. Mg(2+) serves as cofactor.

Its subcellular location is the cytoplasm. It carries out the reaction (7R,8S)-7,8-diammoniononanoate + CO2 + ATP = (4R,5S)-dethiobiotin + ADP + phosphate + 3 H(+). It functions in the pathway cofactor biosynthesis; biotin biosynthesis; biotin from 7,8-diaminononanoate: step 1/2. Catalyzes a mechanistically unusual reaction, the ATP-dependent insertion of CO2 between the N7 and N8 nitrogen atoms of 7,8-diaminopelargonic acid (DAPA, also called 7,8-diammoniononanoate) to form a ureido ring. This is ATP-dependent dethiobiotin synthetase BioD from Saccharopolyspora erythraea (strain ATCC 11635 / DSM 40517 / JCM 4748 / NBRC 13426 / NCIMB 8594 / NRRL 2338).